Consider the following 256-residue polypeptide: Lysosomal membrane ascorbate-dependent ferrireductase CYB561A3 (256 aa).

Residues 1–3 (MAS) are Cytoplasmic-facing. The chain crosses the membrane as a helical span at residues 4–24 (GWFYMSCMVLGSLGSMCILFT). One can recognise a Cytochrome b561 domain in the interval 12–219 (VLGSLGSMCI…FGLLVLYILL (208 aa)). Residues 25 to 40 (TYWMQYWRGGFAWDGT) lie on the Lumenal side of the membrane. Residues 41–61 (VLMFNWHPVLMVSGMVVLYGA) traverse the membrane as a helical segment. Positions 47 and 67 each coordinate heme b. Residues 62–83 (ASLVYRLPASWVGPKLPWKVLH) lie on the Cytoplasmic side of the membrane. 2 residues coordinate L-ascorbate: lysine 76 and lysine 80. Histidine 83 serves as a coordination point for heme b. The helical transmembrane segment at 84 to 104 (AALHLLAFTVTVVGLTAVFGF) threads the bilayer. Topologically, residues 105 to 119 (HNHSKITHLYSLHSW) are lumenal. Asparagine 106 is a glycosylation site (N-linked (GlcNAc...) asparagine). Residues 112 to 115 (HLYS) and histidine 117 each bind heme b. The chain crosses the membrane as a helical span at residues 120–140 (LGITTVALFACQWFLGFAVFL). Residues 141–154 (LPWASQWLRSLLKP) are Cytoplasmic-facing. Arginine 149 contributes to the L-ascorbate binding site. Residues 155–175 (VHVFFGACILSLSIASVISGI) traverse the membrane as a helical segment. Residues histidine 156 and glutamate 177 each contribute to the heme b site. At 176–202 (NEKLFFVLKNATRPYSSLPGEAVFANS) the chain is on the lumenal side. The helical transmembrane segment at 203–223 (TGILVVSFGLLVLYILLASSW) threads the bilayer. Residue arginine 224 coordinates heme b. Residues 224 to 256 (RRPDPGALTDRQVWLLVSHYRWDKAKKACFAPC) are Cytoplasmic-facing.

As to quaternary structure, homodimer. Heme b serves as cofactor. N-glycosylated.

The protein localises to the late endosome membrane. The protein resides in the lysosome membrane. The catalysed reaction is Fe(3+)(out) + L-ascorbate(in) = monodehydro-L-ascorbate radical(in) + Fe(2+)(out) + H(+). Transmembrane reductase that uses ascorbate as an electron donor in the cytoplasm and transfers electrons across membranes to reduce iron cations Fe(3+) into Fe(2+) in the lumen of the late endosome and lysosome. Reduced iron can then be extruded from the late endosome and lysosome to the cytoplasm by divalent metal-specific transporters. It is therefore most probably involved in endosomal and lysosomal cellular iron homeostasis. This Rattus norvegicus (Rat) protein is Lysosomal membrane ascorbate-dependent ferrireductase CYB561A3.